Here is a 111-residue protein sequence, read N- to C-terminus: Flagellar hook-basal body complex protein FliE (111 aa).

Belongs to the FliE family.

It localises to the bacterial flagellum basal body. The chain is Flagellar hook-basal body complex protein FliE from Brucella ovis (strain ATCC 25840 / 63/290 / NCTC 10512).